Reading from the N-terminus, the 203-residue chain is Adenosylcobalamin/alpha-ribazole phosphatase (203 aa).

The active-site Tele-phosphohistidine intermediate is the His8. Glu81 serves as the catalytic Proton donor/acceptor.

This sequence belongs to the phosphoglycerate mutase family.

It carries out the reaction adenosylcob(III)alamin 5'-phosphate + H2O = adenosylcob(III)alamin + phosphate. It catalyses the reaction alpha-ribazole 5'-phosphate + H2O = alpha-ribazole + phosphate. It participates in nucleoside biosynthesis; alpha-ribazole biosynthesis; alpha-ribazole from 5,6-dimethylbenzimidazole: step 2/2. Its function is as follows. Catalyzes the conversion of adenosylcobalamin 5'-phosphate to adenosylcobalamin (vitamin B12); involved in the assembly of the nucleotide loop of cobalamin. Also catalyzes the hydrolysis of the phospho group from alpha-ribazole 5'-phosphate to form alpha-ribazole. This is Adenosylcobalamin/alpha-ribazole phosphatase (cobC) from Escherichia coli (strain K12).